Consider the following 5085-residue polypeptide: MNNIETYYPVTPLQQGLIFHSLLEPESGAYIVQMGLKLQGPLNIPLFEQAWQCLVDRHAIFRTRFVGGKVKEYVQVVLKDLKISLVEHDLIHLSSSEQEAFLHHFAKEDRKRGFDIEQAPLMRLNVFHLNSETVHFLWTLHHVLIDGWSMPLVFGEVFAAYEMLSKGQPLSLPPVRAYRDYIVWLKKQDLQQAEAFWRTYMQGFTEATPLSFGRAYKNPYLDQKQYRELDLTVSEQTSKALQTLARQHRLTVNTIVQGAWALLLNRYSGQDDIVFGATVSGRPADLPGVETMIGLFINTLPVRVQVNAEESVINWLKTLQQQQADFRQYEYTPLVEIQGWSDVPRGQSLFESILVFENMPVGKSGGGESAISIVDVYSEEQTNYPFTLVAASGKTIDIKVKFDESQFELAAIERVVDQLHSLLSSIAKNAKQRIGDLSLISESERQQVLVEWNQTAEDYPSGLCIHQAFEQQAEKTPDAVAVAYKNRELTYAQLNERANQLAHRLIRKGVKPDTLVGICLERSPEMIIGILGVMKAGAAYVPIDPAHPQERIAYMVADSQASALLTQQSLLEILPVTAAHVICLDSDLLADEPVDNASSEVTEQNLAYVIYTSGSTGLPKGVMIEHHSAINLAYALIDAFDIQPTSRVLQFTSFSFDVSVSEVVMALLAGATLVIEDRESLLPGPELIQVLQEQRITTVSMVSSVLAALPDADLPDLHTLIVGGEAPSRELVARYAPGRQFFNCYGPTEATVCSTMMLCQAGMNNPPIGRPIANATVYVLDANLNPVPVGVPGELYIGGKGLARGYWNRPELTAESFIPHPFGTAGERLYRTGDLVRYRQDGNLEFLGRIDHQVKIRGYRIELGEIENAIRQHPAVQEAVVIAREEKAGDKRLAAYLVAAGKAQPPAEEIALFLKETLPEYMVPAGVVWLDAIPLTVNGKVDRRALPVPDWGQLSTKREYVAPRTPTEEMVANIWSQVLSVERVGSFDDFFELGGHSLLATQTVSRLKEAFGVDLPLRVLFECSTVNKLSEWIAAAGEDKSGLSRIPLVPVSRDRHLPLSFAQQRLWFFDRLMPNSALYNIPTAVRLQGELDMDALEQSLQTIIQRHESLRTTFTDHNGEAVSVIHPEIDWKLERIDLRERSEEMRNEAGLRLAKEEANRPFDLVTGPLMRATIIQTDERDFIFLLNVHHIIADGWSAGILIRELFHCYQAFAKAEAPQLAELPIQYADYAYWQREWLTSDVLDEQLSYWRAKLGGAEPLLALPTDRPRPAVQSYAGSSISLLFDDELRANLLALSKREGTTLFMTLLAAFQVFLYRYTGQDDILVGTPEAGRSRQETEGLIGFFINTLVMRTDLSGEPSFKEVLARVRETALGAYAHQDLPFEKLVDELNVERSLSYSPLFQVMFVLQNIPVQADALDGIRILPLEGSQQVETTKFDLTLTMAEAANGLAATFEYNTALFERNTVERMIGHFSSLLKAVAANANQAITALPLMSEVEEQQLVLEWNDTAVAYSTEQLVHELVAQVARDMPDQPAVVTRDQLLTYGQLEAKANQLAHYLQKQGVGRGSLVGICVERSVEMVIGQLAIMKAGAAYIPMDPAYPKERLAFMMHDASMAIVLTQAKLRQKLPADTSRLICLDADWETIAQEPTAALVNTTAASDLAYVIYTSGSTGTPKGVEIEHAALLNLIFWHQRAYDVTATDRASQIAGTAFDASVWEIWPYVTKGATLYLPEEEIRLVPEKLRDWLVASNITVSFLPTPLTESMLALEWPGDTALRYMLTGGDKLHHYPSEKIPFTLVNQYGPTENTVVATAGIVPKEAGQTAAPTIGRPIDNVQVYILDAHRQPVPVGVSGELYIGGSSLARGYLNRPDLTQERFVAHPFTEKAGARLYRTGDLVRSLPDGSIEFIGRADDQTSIRGFRVELGEVETAIVALPAVKEAVVTVCTDKQGTKRLAAYLVLEEGAALATGDIRKALKETLPDYMVPAFFTQLAYLPLTPNGKVDRKNLPAPDFQRPELEGEFVSPSTEKERRLAAIWKDVLGIEQIGIHDNFFELGGDSILSIQIVSRANQAGLSLAPKQLFEYQTIAELAEIVEEKAAVQAEQGAVTGELPLLPIQKWFFRLPLANRDHWNQSVLLSIQAGIDPAALKQAVGQLMFQHDAFRMRYTQSESGWLQAMDAPSETIPFRVEDLSQLAPEEQSSAIEAIANETQTQLSLRAGQVVQTIYFHLGKEVPGRLLIVAHHLVVDGVSWRIILEDLQHAYQQIAAGQEVKLPAKTTSYKEWAQELERYAHSEAFKHEKSYWLSKSSVHSTELPADMPDSAENTEATVKSVHFSLTVEETKALLQQVPQAYRTQINDVLLAALAKALGQWTGKRSVFVNVEGHGREELAEHLDLSRTVGWFTSMYPVHLQWDETFSVRRALLTTKEELRAIPNKGLGYGVLRYLHAEQEIVDAISRIQADVLFNYMGKIDQIVGSDSLFGSAPESSGANLCPSAQRHHLLDVNSVVAGEQLHVTWRYSEKLQRESTIAAVAESFMAALREIVAHCTLPEAGGYSPSDFPLAVLEQKQIDKHIGFDRQIEDVYTLSPLQQGMLFHSLYNQDSGDYVVQFAVTFQNLDVSVLEKAWQNVLDRHSILRTHFVWEGLSEPHQVVRKDVKVTLTKEDWRHLQADVQDEMLAAFLEEDRRRSFDIAQAPLSRWVVFQTKDEEYRFVWSFHHVLLDGWSVPIVLNELLAHYAAISEGREGKLVPSQPFSQYIAWLKRQDREKAKPFWTDQLKGFHEPTSLGMGKNVAASQQKQYKEQSVLLSEEATEHLQSFTREHQLTLNTLVQGAWGWILGSYSGEEEVLFGATGSGRPADLPGVETMVGSFINTLPVRVPLQTDATLLAWLKDLQRRQLEIREYEYTPLFDIQGWSELPRGSALFESILVFENYPTVQAAKKGEDEAASATSGVSLEIHDVAAVEQTNYPLTLVAAPGKQVAFKLKYDQDRFDDAMIERVLNQMTRLMVYMSKSPELRLNDVALMDEDERKQVLIDWNRTEKEYPRELCLHHAFEQQAAKTPENIALEYKEQSLSYAGLNERANQLAHLLIAQGVKPDTTVAICVERSMEMIIGILGVLKAGAAYVPIDPAHPEERIAYMLDDSQAVVVLTQAGLADKFTQAAAPVICLGEKLFADRAHVDVDNIQTDVASTNLAYVIYTSGTTGLPKGVAVEHRSAMNMVQAYIAYFGLDESSRVLQFTSFSFDVSVSEIWQALLSGGTLVIEDRESLLPGPDLVRTLRERRISKVSMASSLLASLPVAEYPDLAVLEVGGDACSRELVARYATGRKFFNCYGPTEATVGTVIKQLTLDDDTPTIGRPFPNTKLYVLDQNRKPVPVGVPGELYIGGECLARGYWNRPELTAERFVANPFGQPGERLYRTGDLVRYLPDGNVDYLGRFDDQVKIRGYRIELGEIAEALRQHAAIREAVVLAREVRPGDKRLAAYLTSAAEQELSVDEIKQWLKEKLPDYMVPASYTWLPAIPLNVNGKVDRKALPAPDWGQITAAYVAPRNPLEEMIANVFAEVLAVEKVGIDDNFFELGGHSLLATQTVSRLREIVGVELQLRTLFEHPTVAGLGEQLELLTKQSSRKLAPPIGKVSRKEPLPLSFTQQRLWFLEQFTQNSSINNIPSFLRIQGELDVAAWEASFSAIILRHESLRTSFEVRDGRPVQVIQPHGDWAMTRIDLRALEPAEREAEIKRLAEQAIVQPFDLTKGLLLRASLVQLDANDFVFLFVMHHIASDGWSMGILLSELMTNYKAFRQGEASPLGELPIQYADFAVWQREWLSGEVLAEQLGYWREKLKGSEPLLQLPTDRPRPPVQTYEGEKMSVQFGAELLKQLQSLSRKEGATLFMTLFAAFQTLLYRYTNQDDILVGTPIAGRNKQETEQLIGYFINTLVLRTDMSGHPSFRELLARVRETALEAYAHQDVPFEKLLDELQLERSMSYSPLFQVMFILQNIPVQAEPAGDIQLSSFDLELGAVTSKFDMTVTMVETPDGLLATLEYNKALFDSSTITRMVEHFHKLMEEIVANPDQSITLLPLMREEEEQLLITEWNRTEVPYSREKCVHEMIEEMVSKAPDSIALIVGEQRVTYGELNRQANQLAHYLRKQGVGPEVLVGICAERTVEMMIGLLAILKAGGAYVPIDPAYPAERIAYIIGHSQIPVLLTQEHLLPTLPEHQAKVICLDRDWATVAVESEENPGKLATSDNLIYVIYTSGSTGNPKGVALEHRSVIYFLSWAHDTYTPEEMSGVLFSTSICFDLSVYEMFATLTMGGKVIMAENALQLPALPAADQVTLVNTVPSAATELVRMKGIPASVRVINLCGEPLSNRLAQELYAFPHVEKVFNLYGPTEDTVYSTHAIVTKGATNEPLIGRPQFNTHVFVLDSHRKPVPVGVPGELYLSGSGLARGYLHRPDLTAERFVQNPFREPGARMYRTGDLVRYLPDGNLQFVGRVDYQVKIRGYRIELGEIESVLNRFPGVKEVVLLAREDREGDKCLVAYIVFEADCTSKIHDLNHFLADKLPAYMIPQHYMILDSLPKTPNGKLDRKALPKPEYDRSEAGVEYVAPQTPVEIMLHAHWAAVLEMETIGVHDNFFEIGGHSLLATQLIFKVREELQLEVPLRILFETPTIAGMAKTIEEIIKHGLTSVSQEIDAKGLQDEVALDPAILAEQPYEGDPSQFQAALLTGATGFLGAFLLRDLLQMTDADIYCLVRASGEEEGLARLRKTLQLYELWDEAQAHRIIPVIGDLAQPRLGLSAGQFDALAATVDVIYHNGALVNFVYPYAALKKANVIGTEEIIRLAAAKKTKPVHFVSTIFTFASEEGEESVAVREEDMPENSRILTSGYTQSKWVAEHIVNLARQRGIPTAIYRCGRMTGDSETGACQKDDLMWRIAAGIIDLGKAPDMSGDLDMMPVDFASKGIVHLSMTEHSVNSNFHLLNPNATDYDDLIAAIENKGFELERVTMDEWIEAVQEDAKDKGMDANSAAPLGNLFSDGHSSRGSVVYVGNKTTRLLRQADIECPEIDEEVFAKVLDYFARTGQLRVTQNTRN.

Carrier domains are found at residues 962–1037 (APRT…AAAG), 2023–2097 (SPST…EEKA), 3544–3619 (APRN…ELLT), and 4601–4676 (APQT…EEII). An O-(pantetheine 4'-phosphoryl)serine mark is found at Ser-997, Ser-2058, Ser-3579, and Ser-4636.

Belongs to the ATP-dependent AMP-binding enzyme family. As to quaternary structure, large multienzyme complex composed of 4 subunits; LgrA, LgrB, LgrC and LgrD. It depends on pantetheine 4'-phosphate as a cofactor.

In terms of biological role, activates the 13th to the 16th (Trp, D-Leu, Trp and Gly) amino acids in linear gramicidin and catalyzes the formation of the peptide bond between them. This enzyme is also responsible for the epimerization of the 14th (D-Leu) amino acid. It also catalyzes the NAD(P)H-dependent reduction of the C-terminal glycine residue of the N-formylated 16-mer peptide, that binds to the peptidyl carrier domain of the terminal module of this protein, to form a peptidyl-aldehyde intermediate that is released from the enzyme complex. The chain is Linear gramicidin synthase subunit D (lgrD) from Brevibacillus parabrevis.